Consider the following 381-residue polypeptide: Orotidine 5'-phosphate decarboxylase (381 aa).

Residues Asp42, 64–66, 99–108, Tyr333, and Arg352 contribute to the substrate site; these read KTH and DRKFGDIGHT. Residue Lys101 is the Proton donor of the active site. The tract at residues 311-333 is disordered; it reads LPPEDEDQQTNGSVGGDGQGQQY.

The protein belongs to the OMP decarboxylase family.

The enzyme catalyses orotidine 5'-phosphate + H(+) = UMP + CO2. Its pathway is pyrimidine metabolism; UMP biosynthesis via de novo pathway; UMP from orotate: step 2/2. In Hypocrea jecorina (Trichoderma reesei), this protein is Orotidine 5'-phosphate decarboxylase (ura3).